We begin with the raw amino-acid sequence, 317 residues long: Protoheme IX farnesyltransferase (317 aa).

The next 8 helical transmembrane spans lie at 25-45 (FFAL…LVGM), 54-74 (PVIA…SGCL), 126-146 (LAAG…SMWL), 154-174 (IVIG…VVTG), 181-201 (LVLF…LALV), 227-244 (IVAY…PVAL), 249-271 (LIYG…QVYH), and 281-301 (AAMG…SALL).

The protein belongs to the UbiA prenyltransferase family. Protoheme IX farnesyltransferase subfamily.

The protein localises to the cell inner membrane. It carries out the reaction heme b + (2E,6E)-farnesyl diphosphate + H2O = Fe(II)-heme o + diphosphate. It participates in porphyrin-containing compound metabolism; heme O biosynthesis; heme O from protoheme: step 1/1. Functionally, converts heme B (protoheme IX) to heme O by substitution of the vinyl group on carbon 2 of heme B porphyrin ring with a hydroxyethyl farnesyl side group. The protein is Protoheme IX farnesyltransferase of Methylobacterium sp. (strain 4-46).